The chain runs to 161 residues: Nucleotide-binding protein Sden_0770 (161 aa).

It belongs to the YajQ family.

Functionally, nucleotide-binding protein. The polypeptide is Nucleotide-binding protein Sden_0770 (Shewanella denitrificans (strain OS217 / ATCC BAA-1090 / DSM 15013)).